A 190-amino-acid chain; its full sequence is dCTP deaminase, dUMP-forming (190 aa).

DCTP-binding positions include 101–106 (KSSLGR), aspartate 119, 127–129 (TLE), glutamine 148, tyrosine 162, and glutamine 174. Catalysis depends on glutamate 129, which acts as the Proton donor/acceptor. The segment at 161 to 190 (PYGSSGVGSKYQGQRGPTPSRSYQNFIRST) is disordered. The span at 171–190 (YQGQRGPTPSRSYQNFIRST) shows a compositional bias: polar residues.

It belongs to the dCTP deaminase family. Homotrimer.

It carries out the reaction dCTP + 2 H2O = dUMP + NH4(+) + diphosphate. It participates in pyrimidine metabolism; dUMP biosynthesis; dUMP from dCTP: step 1/1. Its function is as follows. Bifunctional enzyme that catalyzes both the deamination of dCTP to dUTP and the hydrolysis of dUTP to dUMP without releasing the toxic dUTP intermediate. This Mycobacterium ulcerans (strain Agy99) protein is dCTP deaminase, dUMP-forming.